Reading from the N-terminus, the 109-residue chain is Putative RNase MJ1380 (109 aa).

Catalysis depends on residues arginine 76 and histidine 81. An RX(4)HXY motif motif is present at residues 76–83; it reads RNILIHKY. Tyrosine 83 carries the post-translational modification O-di-AMP-tyrosine.

It belongs to the HepT RNase toxin family. In terms of assembly, homodimer, probably forms a complex with cognate antitoxin MJ1379. Modified by cognate antitoxin MJ1379; probably at least 2 successive AMPylation events occur on Tyr-83.

Probable toxic component of a putative type VII toxin-antitoxin (TA) system, probably an RNase. Probably neutralized by cognate antitoxin MJ1379. Neutralization may be due to AMPylation by antitoxin MJ1379. The polypeptide is Putative RNase MJ1380 (Methanocaldococcus jannaschii (strain ATCC 43067 / DSM 2661 / JAL-1 / JCM 10045 / NBRC 100440) (Methanococcus jannaschii)).